Here is a 629-residue protein sequence, read N- to C-terminus: Translation initiation factor IF-2 (629 aa).

Residues 1 to 20 are disordered; it reads MAKNIKTNKKPQQVNKKEMS. The 171-residue stretch at 127 to 297 folds into the tr-type G domain; that stretch reads HRAPIVTIMG…LLIAEMQDYK (171 aa). The interval 136-143 is G1; the sequence is GHVDHGKT. GTP is bound at residue 136-143; sequence GHVDHGKT. The segment at 161–165 is G2; sequence GITQA. The segment at 183–186 is G3; that stretch reads DTPG. GTP-binding positions include 183–187 and 237–240; these read DTPGH and NKCD. The tract at residues 237–240 is G4; that stretch reads NKCD. Residues 273–275 form a G5 region; that stretch reads SAK.

This sequence belongs to the TRAFAC class translation factor GTPase superfamily. Classic translation factor GTPase family. IF-2 subfamily.

It localises to the cytoplasm. One of the essential components for the initiation of protein synthesis. Protects formylmethionyl-tRNA from spontaneous hydrolysis and promotes its binding to the 30S ribosomal subunits. Also involved in the hydrolysis of GTP during the formation of the 70S ribosomal complex. In Mesoplasma florum (strain ATCC 33453 / NBRC 100688 / NCTC 11704 / L1) (Acholeplasma florum), this protein is Translation initiation factor IF-2.